The sequence spans 246 residues: YjeF N-terminal domain-containing 3 (246 aa).

The YjeF N-terminal domain occupies 24–234; that stretch reads VATVETELLR…DIQKKYELNL (211 aa).

As to quaternary structure, interacts with apoa1a. Binds to high-density lipoprotein.

In terms of biological role, accelerates cholesterol efflux from endothelial cells to high-density lipoprotein (HDL) and thereby regulates angiogenesis. Orchestrates hematopoietic stem and progenitor cell emergence from the hemogenic endothelium, a type of specialized endothelium manifesting hematopoietic potential. YJEFN3-mediated cholesterol efflux activates endothelial SREBF2, the master transcription factor for cholesterol biosynthesis, which in turn transactivates NOTCH and promotes hematopoietic stem and progenitor cell emergence. In Danio rerio (Zebrafish), this protein is YjeF N-terminal domain-containing 3.